The primary structure comprises 1247 residues: Nitric oxide synthase (1247 aa).

The tract at residues 13-33 is disordered; it reads EVAEGRESSKANHIGEERRGY. Residue serine 146 participates in (6R)-L-erythro-5,6,7,8-tetrahydrobiopterin binding. Residue cysteine 224 coordinates heme b. L-arginine-binding residues include glutamine 287, tryptophan 396, tyrosine 397, glutamate 401, and asparagine 406. The (6R)-L-erythro-5,6,7,8-tetrahydrobiopterin site is built by tryptophan 487 and phenylalanine 500. Tyrosine 515 is a heme b binding site. Positions 537–557 are calmodulin-binding; sequence PRRKFNFKQIARAVKFTSKLF. A Flavodoxin-like domain is found at 567-766; it reads ATVLYATETG…AFRKWAPEVF (200 aa). 712–743 lines the FMN pocket; it reads VFALGSSAYPNFCAFGKYIDNILGELGGERLM. Residues 795-1065 enclose the FAD-binding FR-type domain; that stretch reads NTVRYAPVAE…VRSAPSFHMS (271 aa). Residues 855-866 and 998-1008 each bind FAD; these read YEPGDHVGIFPA and LQPRFYSISSS. NADP(+)-binding positions include 1073–1091 and 1170–1185; these read ILIGPGTGIAPFRSFWQEW and KGHIYVCGDVTMAEHV.

Belongs to the NOS family. Heme b serves as cofactor. Requires FAD as cofactor. It depends on FMN as a cofactor.

The enzyme catalyses 2 L-arginine + 3 NADPH + 4 O2 + H(+) = 2 L-citrulline + 2 nitric oxide + 3 NADP(+) + 4 H2O. With respect to regulation, stimulated by calcium/calmodulin. Functionally, produces nitric oxide (NO) which is a messenger molecule with diverse functions throughout the body. Nitric oxide limits plasmodium development in the midgut. The chain is Nitric oxide synthase from Anopheles stephensi (Indo-Pakistan malaria mosquito).